The chain runs to 319 residues: Cobalamin biosynthesis protein CbiB (319 aa).

Transmembrane regions (helical) follow at residues 56–76, 82–102, 153–173, 204–224, and 296–316; these read VMWVVVVGATWGVAWGVLALA, WFGWSVEVWMIFTTLAGRSLA, VDGIIAPLFFLFLGGAPLAMA, VANYLPARLSWLLLGIAAGLC, and LMWVASTLALALFIAARCGLS.

This sequence belongs to the CobD/CbiB family.

The protein resides in the cell membrane. Its pathway is cofactor biosynthesis; adenosylcobalamin biosynthesis. In terms of biological role, converts cobyric acid to cobinamide by the addition of aminopropanol on the F carboxylic group. However, the true cosubstrate could be (R)-1-amino-2-propanol O-2-phosphate, leading to cobinamide phosphate. The polypeptide is Cobalamin biosynthesis protein CbiB (Salmonella paratyphi B (strain ATCC BAA-1250 / SPB7)).